A 198-amino-acid polypeptide reads, in one-letter code: MDPFSILLTLTLIILAQNAVRIVGKSQIHQSIWNLYLRYSNDQQILKLRNLKAESYDVYKQRSNTSAQDEYAKWTKLNRKYDQLQTEIKAVSDQVSQQQQAIEKYLGLAISVTTTLPLWLFRFKYRKQPLFYFPKDTFPSYLEWILSFPSVPQGSIGIMFWILLLNKFVSNLEFIVKTFSTKVEKPVPIVKVEDLSPK.

The Lumenal portion of the chain corresponds to 1-6 (MDPFSI). Residues 7–26 (LLTLTLIILAQNAVRIVGKS) traverse the membrane as a helical segment. The Cytoplasmic portion of the chain corresponds to 27-110 (QIHQSIWNLY…AIEKYLGLAI (84 aa)). A coiled-coil region spans residues 73–106 (KWTKLNRKYDQLQTEIKAVSDQVSQQQQAIEKYL). Residues 111-131 (SVTTTLPLWLFRFKYRKQPLF) traverse the membrane as a helical segment. Over 132–155 (YFPKDTFPSYLEWILSFPSVPQGS) the chain is Lumenal. Residues 156–172 (IGIMFWILLLNKFVSNL) traverse the membrane as a helical segment. Over 173–198 (EFIVKTFSTKVEKPVPIVKVEDLSPK) the chain is Cytoplasmic.

Belongs to the WRB/GET1 family. As to quaternary structure, component of the Golgi to ER traffic (GET) complex, which is composed of GET1, GET2 and GET3. Within the complex, GET1 and GET2 form a heterotetramer which is stabilized by phosphatidylinositol binding and which binds to the GET3 homodimer.

The protein localises to the endoplasmic reticulum membrane. Its subcellular location is the golgi apparatus membrane. Required for the post-translational delivery of tail-anchored (TA) proteins to the endoplasmic reticulum. Together with GET2, acts as a membrane receptor for soluble GET3, which recognizes and selectively binds the transmembrane domain of TA proteins in the cytosol. The GET complex cooperates with the HDEL receptor ERD2 to mediate the ATP-dependent retrieval of resident ER proteins that contain a C-terminal H-D-E-L retention signal from the Golgi to the ER. The sequence is that of Golgi to ER traffic protein 1 from Komagataella phaffii (strain GS115 / ATCC 20864) (Yeast).